The sequence spans 1085 residues: RecBCD enzyme subunit RecC (1085 aa).

The protein belongs to the RecC family. Heterotrimer of RecB, RecC and RecD. All subunits contribute to DNA-binding.

Functionally, a helicase/nuclease that prepares dsDNA breaks (DSB) for recombinational DNA repair. Binds to DSBs and unwinds DNA via a highly rapid and processive ATP-dependent bidirectional helicase activity. Holoenzyme degrades any linearized DNA that is unable to undergo homologous recombination. In the holoenzyme this subunit recognizes the wild-type Chi sequence, and when added to isolated RecB increases its ATP-dependent helicase processivity. Unlike the case in E.coli, suppresses RecA-dependent homologous recombination, is instead required for single-strand annealing pathway repair of DSB. This Mycolicibacterium smegmatis (strain ATCC 700084 / mc(2)155) (Mycobacterium smegmatis) protein is RecBCD enzyme subunit RecC.